Consider the following 279-residue polypeptide: Pantothenate synthetase (279 aa).

26–33 is an ATP binding site; it reads MGNLHDGH. His-33 serves as the catalytic Proton donor. Gln-57 contacts (R)-pantoate. Gln-57 is a binding site for beta-alanine. An ATP-binding site is contributed by 144 to 147; the sequence is GKKD. Gln-150 serves as a coordination point for (R)-pantoate. Residues Val-173 and 181 to 184 each bind ATP; that span reads LSSR.

This sequence belongs to the pantothenate synthetase family. In terms of assembly, homodimer.

It localises to the cytoplasm. The enzyme catalyses (R)-pantoate + beta-alanine + ATP = (R)-pantothenate + AMP + diphosphate + H(+). It functions in the pathway cofactor biosynthesis; (R)-pantothenate biosynthesis; (R)-pantothenate from (R)-pantoate and beta-alanine: step 1/1. Functionally, catalyzes the condensation of pantoate with beta-alanine in an ATP-dependent reaction via a pantoyl-adenylate intermediate. The sequence is that of Pantothenate synthetase from Burkholderia mallei (strain NCTC 10229).